The sequence spans 723 residues: Tripartite motif-containing protein 42 (723 aa).

Residues 146–192 (CPMCSRLRLHSFMLPCNHSLCEKCLRQLQKHAEVTENFFILICPVCD) form an RING-type zinc finger. 2 B box-type zinc fingers span residues 235-280 (PILC…FVDT) and 285-326 (QDEK…TISL). Residues Cys-290, His-293, Cys-313, and His-318 each contribute to the Zn(2+) site. Positions 382 to 407 (KLRSILQEKEKIIMEQIENLEVSRQK) form a coiled coil. The COS domain maps to 434–492 (LKETGQVAFLQSAKILVDQIEDGIQTTYRPDPQLRLHSINYVPLDFVELSSAIHELFPT). A Fibronectin type-III domain is found at 603–701 (TPGPIVIYQT…DICKVVTPDG (99 aa)).

The protein belongs to the TRIM/RBCC family.

The polypeptide is Tripartite motif-containing protein 42 (TRIM42) (Homo sapiens (Human)).